Reading from the N-terminus, the 80-residue chain is RNA-binding protein Hfq (80 aa).

The region spanning 9–68 (EPFLNALRKERIPVSIYLVNGIKLQGQIDSFDQFVVLLKNTVSQMVYKHAISTIVPSRPV) is the Sm domain.

The protein belongs to the Hfq family. Homohexamer.

Its function is as follows. RNA chaperone that binds small regulatory RNA (sRNAs) and mRNAs to facilitate mRNA translational regulation in response to envelope stress, environmental stress and changes in metabolite concentrations. Also binds with high specificity to tRNAs. In Thioalkalivibrio sulfidiphilus (strain HL-EbGR7), this protein is RNA-binding protein Hfq.